The sequence spans 401 residues: Aspartokinase (401 aa).

Belongs to the aspartokinase family.

It catalyses the reaction L-aspartate + ATP = 4-phospho-L-aspartate + ADP. It participates in amino-acid biosynthesis; L-lysine biosynthesis via DAP pathway; (S)-tetrahydrodipicolinate from L-aspartate: step 1/4. The protein operates within amino-acid biosynthesis; L-methionine biosynthesis via de novo pathway; L-homoserine from L-aspartate: step 1/3. Its pathway is amino-acid biosynthesis; L-threonine biosynthesis; L-threonine from L-aspartate: step 1/5. The chain is Aspartokinase (lysC) from Rickettsia conorii (strain ATCC VR-613 / Malish 7).